A 436-amino-acid polypeptide reads, in one-letter code: Trigger factor (436 aa).

In terms of domain architecture, PPIase FKBP-type spans 161–246 (DLRVNMDFVG…LNKVEKQDLP (86 aa)).

It belongs to the FKBP-type PPIase family. Tig subfamily.

It localises to the cytoplasm. The catalysed reaction is [protein]-peptidylproline (omega=180) = [protein]-peptidylproline (omega=0). Functionally, involved in protein export. Acts as a chaperone by maintaining the newly synthesized protein in an open conformation. Functions as a peptidyl-prolyl cis-trans isomerase. The sequence is that of Trigger factor from Tolumonas auensis (strain DSM 9187 / NBRC 110442 / TA 4).